Reading from the N-terminus, the 143-residue chain is HTH-type transcriptional regulator MntR (143 aa).

The 63-residue stretch at 1–63 folds into the HTH dtxR-type domain; that stretch reads MPTPSMEDYL…YERYRGLVLT (63 aa). The Mn(2+) site is built by Asp-8, Glu-11, His-77, Glu-99, Glu-102, and His-103.

Belongs to the DtxR/MntR family. In terms of assembly, homodimer.

It localises to the cytoplasm. DNA binding is strongly activated by Mn(2+). In terms of biological role, central regulator of manganese homeostasis. This Shouchella clausii (strain KSM-K16) (Alkalihalobacillus clausii) protein is HTH-type transcriptional regulator MntR.